We begin with the raw amino-acid sequence, 140 residues long: Required for drug-induced death protein 1 (140 aa).

A disordered region spans residues 1-95 (MTVGARLRSK…DKPKKRYRRK (95 aa)). Positions 29–53 (EETDAIVEHLEGEDEDPESQDCERE) are enriched in acidic residues. A helical membrane pass occupies residues 118 to 140 (LQGFAAAYSAPFGVATSVVSFVR).

The protein resides in the membrane. Functionally, regulates drug efflux through modulation of ABCB1 localization and activity. In Rattus norvegicus (Rat), this protein is Required for drug-induced death protein 1.